The sequence spans 175 residues: Nucleoside diphosphate kinase 6 (175 aa).

Residues K8, F57, R85, T91, R105, and N115 each coordinate ATP. H118 acts as the Pros-phosphohistidine intermediate in catalysis.

It belongs to the NDK family. Requires Mg(2+) as cofactor.

The catalysed reaction is a 2'-deoxyribonucleoside 5'-diphosphate + ATP = a 2'-deoxyribonucleoside 5'-triphosphate + ADP. The enzyme catalyses a ribonucleoside 5'-diphosphate + ATP = a ribonucleoside 5'-triphosphate + ADP. Its function is as follows. Major role in the synthesis of nucleoside triphosphates other than ATP. The ATP gamma phosphate is transferred to the NDP beta phosphate via a ping-pong mechanism, using a phosphorylated active-site intermediate. The chain is Nucleoside diphosphate kinase 6 (Nme6) from Rattus norvegicus (Rat).